We begin with the raw amino-acid sequence, 380 residues long: Protein trichome birefringence-like 38 (380 aa).

Residues 7-29 (SLLLLFLPLLTVTILSGVEQAFA) form a helical; Signal-anchor for type II membrane protein membrane-spanning segment. Positions 134-136 (GDS) match the GDS motif motif. The DCXHWCLPGXXDXWN motif signature appears at 357 to 371 (DCSHWCLPGLPDTWN).

It belongs to the PC-esterase family. TBL subfamily.

The protein localises to the membrane. Functionally, may act as a bridging protein that binds pectin and other cell wall polysaccharides. Probably involved in maintaining esterification of pectins. May be involved in the specific O-acetylation of cell wall polymers. The chain is Protein trichome birefringence-like 38 (TBL38) from Arabidopsis thaliana (Mouse-ear cress).